Consider the following 607-residue polypeptide: UvrABC system protein C (607 aa).

A GIY-YIG domain is found at 16-94 (GRPGVYRMFD…IKEWRPPYNI (79 aa)). One can recognise a UVR domain in the interval 203 to 238 (NALTDELSAGMEQAASTLDFEKAAELRDQISLLRRV).

This sequence belongs to the UvrC family. Interacts with UvrB in an incision complex.

It is found in the cytoplasm. The UvrABC repair system catalyzes the recognition and processing of DNA lesions. UvrC both incises the 5' and 3' sides of the lesion. The N-terminal half is responsible for the 3' incision and the C-terminal half is responsible for the 5' incision. The sequence is that of UvrABC system protein C from Pseudomonas protegens (strain DSM 19095 / LMG 27888 / CFBP 6595 / CHA0).